Reading from the N-terminus, the 384-residue chain is tRNA-specific 2-thiouridylase MnmA (384 aa).

ATP-binding positions include 9 to 16 and Met35; that span reads GMSGGVDS. The segment at 95-97 is interaction with target base in tRNA; sequence NPD. The Nucleophile role is filled by Cys100. The cysteines at positions 100 and 196 are disulfide-linked. Gly124 contributes to the ATP binding site. Positions 146-148 are interaction with tRNA; sequence KDQ. Residue Cys196 is the Cysteine persulfide intermediate of the active site. An interaction with tRNA region spans residues 308–309; it reads RY.

The protein belongs to the MnmA/TRMU family.

It is found in the cytoplasm. It carries out the reaction S-sulfanyl-L-cysteinyl-[protein] + uridine(34) in tRNA + AH2 + ATP = 2-thiouridine(34) in tRNA + L-cysteinyl-[protein] + A + AMP + diphosphate + H(+). Catalyzes the 2-thiolation of uridine at the wobble position (U34) of tRNA, leading to the formation of s(2)U34. In Burkholderia vietnamiensis (strain G4 / LMG 22486) (Burkholderia cepacia (strain R1808)), this protein is tRNA-specific 2-thiouridylase MnmA.